We begin with the raw amino-acid sequence, 511 residues long: Histidine ammonia-lyase (511 aa).

Positions 142–144 form a cross-link, 5-imidazolinone (Ala-Gly); it reads ASG. S143 is modified (2,3-didehydroalanine (Ser)).

This sequence belongs to the PAL/histidase family. Contains an active site 4-methylidene-imidazol-5-one (MIO), which is formed autocatalytically by cyclization and dehydration of residues Ala-Ser-Gly.

The protein resides in the cytoplasm. The enzyme catalyses L-histidine = trans-urocanate + NH4(+). It participates in amino-acid degradation; L-histidine degradation into L-glutamate; N-formimidoyl-L-glutamate from L-histidine: step 1/3. This is Histidine ammonia-lyase from Chelativorans sp. (strain BNC1).